Here is a 246-residue protein sequence, read N- to C-terminus: PARP-type zinc finger-containing protein C2A9.07c (246 aa).

The PARP-type; degenerate zinc finger occupies 8–99 (YRVELAKTGR…EKILRAFEQG (92 aa)). Basic and acidic residues predominate over residues 103–126 (EEDEERCRKMASDASEEKDRKIEE). The interval 103-246 (EEDEERCRKM…ESGNEYSDSD (144 aa)) is disordered. At Thr130 the chain carries Phosphothreonine. At Ser131 the chain carries Phosphoserine. The span at 157–168 (NKKHKAERKRSP) shows a compositional bias: basic residues. Residues 175–184 (LEDDEEIEDV) show a composition bias toward acidic residues. Basic and acidic residues predominate over residues 185–196 (ASDKDEEEKPWS). The segment covering 197–215 (GDEEDDDELVVKDSEDETE) has biased composition (acidic residues). Phosphoserine occurs at positions 243 and 245.

It is found in the nucleus. It localises to the mitochondrion. This is PARP-type zinc finger-containing protein C2A9.07c from Schizosaccharomyces pombe (strain 972 / ATCC 24843) (Fission yeast).